A 663-amino-acid polypeptide reads, in one-letter code: Sodium/potassium/calcium exchanger 1 (663 aa).

Topologically, residues Ser32–Gln128 are extracellular. Asn59, Asn66, and Asn100 each carry an N-linked (GlcNAc...) asparagine glycan. The helical transmembrane segment at Gly129–Cys149 threads the bilayer. Residues Asp150 to Ala173 are Cytoplasmic-facing. The stretch at Val170–Phe210 is one Alpha-1 repeat. A helical transmembrane segment spans residues Thr174 to Ile194. Residues Ser195 to Gly200 lie on the Extracellular side of the membrane. Residues Ile201 to Leu221 traverse the membrane as a helical segment. Residues Phe222 to His228 lie on the Cytoplasmic side of the membrane. The chain crosses the membrane as a helical span at residues Leu229 to Leu253. The Extracellular portion of the chain corresponds to Asp254–Trp259. The chain crosses the membrane as a helical span at residues Trp260–Met276. Over Lys277–Lys471 the chain is Cytoplasmic. Disordered stretches follow at residues Lys308–Asn343 and Leu384–Trp465. The span at Asp316–Lys325 shows a compositional bias: basic and acidic residues. Polar residues-rich tracts occupy residues Gln327–Asn343 and Ala399–Ser412. Phosphoserine is present on Ser337. A compositionally biased stretch (basic and acidic residues) spans Glu413–Thr423. Residues Asp434–Leu461 show a composition bias toward acidic residues. A helical membrane pass occupies residues Gln472–Val492. At Arg493–Lys499 the chain is on the extracellular side. Residues Phe500–Val520 traverse the membrane as a helical segment. Residues Trp521–Glu535 lie on the Cytoplasmic side of the membrane. A helical transmembrane segment spans residues Ile536–Ile556. An Alpha-2 repeat occupies Ala543 to Asn574. At Val557–Asn574 the chain is on the extracellular side. A helical membrane pass occupies residues Ile575–Phe595. Over Ser596–Gly604 the chain is Cytoplasmic. A helical membrane pass occupies residues Leu605–Leu625. The Extracellular portion of the chain corresponds to Cys626 to Lys632. The helical transmembrane segment at Ile633–Glu653 threads the bilayer. Residues Asp654–Val663 lie on the Cytoplasmic side of the membrane.

Belongs to the Ca(2+):cation antiporter (CaCA) (TC 2.A.19) family. SLC24A subfamily. Post-translationally, the uncleaved signal sequence is required for efficient membrane targeting and proper membrane integration and topology. Retinal rods. Localizes to the inner segment of rod photoreceptors.

It localises to the cell membrane. It carries out the reaction Ca(2+)(out) + K(+)(out) + 4 Na(+)(in) = Ca(2+)(in) + K(+)(in) + 4 Na(+)(out). Calcium, potassium:sodium antiporter that transports 1 Ca(2+) and 1 K(+) in exchange for 4 Na(+). Critical component of the visual transduction cascade, controlling the calcium concentration of outer segments during light and darkness. Light causes a rapid lowering of cytosolic free calcium in the outer segment of both retinal rod and cone photoreceptors and the light-induced lowering of calcium is caused by extrusion via this protein which plays a key role in the process of light adaptation. The chain is Sodium/potassium/calcium exchanger 1 (SLC24A1) from Gallus gallus (Chicken).